The chain runs to 209 residues: Kynurenine formamidase (209 aa).

Tryptophan 20 contacts substrate. 3 residues coordinate Zn(2+): histidine 50, histidine 54, and aspartate 56. Histidine 60 (proton donor/acceptor) is an active-site residue. Zn(2+) contacts are provided by histidine 161 and glutamate 173.

The protein belongs to the Cyclase 1 superfamily. KynB family. As to quaternary structure, homodimer. It depends on Zn(2+) as a cofactor.

It catalyses the reaction N-formyl-L-kynurenine + H2O = L-kynurenine + formate + H(+). It functions in the pathway amino-acid degradation; L-tryptophan degradation via kynurenine pathway; L-kynurenine from L-tryptophan: step 2/2. Catalyzes the hydrolysis of N-formyl-L-kynurenine to L-kynurenine, the second step in the kynurenine pathway of tryptophan degradation. The polypeptide is Kynurenine formamidase (Bacillus anthracis).